A 211-amino-acid chain; its full sequence is Redox-sensing transcriptional repressor Rex (211 aa).

A DNA-binding region (H-T-H motif) is located at residues 17 to 56 (KYHRYLEELLRNEVDRISSKELSKKIGFTASQIRQDFNCF). 91-96 (GGGNIG) lines the NAD(+) pocket.

This sequence belongs to the transcriptional regulatory Rex family. As to quaternary structure, homodimer.

It is found in the cytoplasm. Functionally, modulates transcription in response to changes in cellular NADH/NAD(+) redox state. This is Redox-sensing transcriptional repressor Rex from Clostridium tetani (strain Massachusetts / E88).